Reading from the N-terminus, the 373-residue chain is Glutamine synthetase (373 aa).

Residue Ala2 is modified to N-acetylalanine. A required for glutamine-induced ubiquitination by CRL4(CRBN) and proteasomal degradation region spans residues 2–25; the sequence is ATSASSHLNKGIKQVYMALPQGDK. 2 positions are modified to N6-acetyllysine: Lys11 and Lys14. One can recognise a GS beta-grasp domain in the interval 26-106; sequence VQAMYIWIDG…VFCEVFKYNR (81 aa). Tyr104 carries the post-translational modification Phosphotyrosine. Positions 113 to 373 constitute a GS catalytic domain; the sequence is LRHTCKRIMD…TGDEPFQYKN (261 aa). Glu134 serves as a coordination point for ATP. Positions 134, 136, 196, and 203 each coordinate Mn(2+). 203–208 is a binding site for ATP; that stretch reads EFQIGP. 246 to 247 provides a ligand contact to L-glutamate; sequence NW. Residue His253 participates in Mn(2+) binding. ATP is bound by residues 255–257, Arg319, and Arg324; that span reads NFS. An L-glutamate-binding site is contributed by Arg319. 336–338 contributes to the ADP binding site; it reads YFE. Residue Glu338 coordinates Mn(2+). Arg340 provides a ligand contact to L-glutamate. Phosphoserine is present on Ser343.

It belongs to the glutamine synthetase family. Decamer; composed of two pentamers. Interacts with PALMD. Interacts with RHOJ. Interacts with BEST2; this interaction tethers a fraction of GLUL to the membrane, causing a decrease of cytosolic glutamine synthase (GS) activity and inhibits the chloride channel activity of BEST2 by affecting the gating at the aperture in the absence of intracellular glutamate. The cofactor is Mg(2+). Mn(2+) serves as cofactor. In terms of processing, palmitoylated; undergoes autopalmitoylation. Post-translationally, acetylated by EP300/p300; acetylation is stimulated by increased glutamine levels and promotes ubiquitin-mediated proteasomal degradation. Ubiquitinated by ZNRF1. Ubiquitinated by the DCX (DDB1-CUL4-X-box) E3 ubiquitin-protein ligase complex called CRL4(CRBN), leading to proteasomal degradation.

It localises to the cytoplasm. It is found in the cytosol. Its subcellular location is the microsome. The protein resides in the mitochondrion. The protein localises to the cell membrane. It catalyses the reaction L-glutamate + NH4(+) + ATP = L-glutamine + ADP + phosphate + H(+). It carries out the reaction L-cysteinyl-[protein] + hexadecanoyl-CoA = S-hexadecanoyl-L-cysteinyl-[protein] + CoA. Its activity is regulated as follows. Glutamine synthetase activity is inhibited by methionine sulfoximine (MSO). Its function is as follows. Glutamine synthetase that catalyzes the ATP-dependent conversion of glutamate and ammonia to glutamine. Its role depends on tissue localization: in the brain, it regulates the levels of toxic ammonia and converts neurotoxic glutamate to harmless glutamine, whereas in the liver, it is one of the enzymes responsible for the removal of ammonia. Plays a key role in ammonium detoxification during erythropoiesis: the glutamine synthetase activity is required to remove ammonium generated by porphobilinogen deaminase (HMBS) during heme biosynthesis to prevent ammonium accumulation and oxidative stress. Essential for proliferation of fetal skin fibroblasts. Independently of its glutamine synthetase activity, required for endothelial cell migration during vascular development. Involved in angiogenesis by regulating membrane localization and activation of the GTPase RHOJ, possibly by promoting RHOJ palmitoylation. May act as a palmitoyltransferase for RHOJ: able to autopalmitoylate and then transfer the palmitoyl group to RHOJ. Plays a role in ribosomal 40S subunit biogenesis. Through the interaction with BEST2, inhibits BEST2 channel activity by affecting the gating at the aperture in the absence of intracellular L-glutamate, but sensitizes BEST2 to intracellular L-glutamate, which promotes the opening of BEST2 and thus relieves its inhibitory effect on BEST2. In Bos taurus (Bovine), this protein is Glutamine synthetase.